The chain runs to 198 residues: ATP-dependent Clp protease proteolytic subunit (198 aa).

The Nucleophile role is filled by S98. H123 is a catalytic residue.

Belongs to the peptidase S14 family. Fourteen ClpP subunits assemble into 2 heptameric rings which stack back to back to give a disk-like structure with a central cavity, resembling the structure of eukaryotic proteasomes.

Its subcellular location is the cytoplasm. The enzyme catalyses Hydrolysis of proteins to small peptides in the presence of ATP and magnesium. alpha-casein is the usual test substrate. In the absence of ATP, only oligopeptides shorter than five residues are hydrolyzed (such as succinyl-Leu-Tyr-|-NHMec, and Leu-Tyr-Leu-|-Tyr-Trp, in which cleavage of the -Tyr-|-Leu- and -Tyr-|-Trp bonds also occurs).. Functionally, cleaves peptides in various proteins in a process that requires ATP hydrolysis. Has a chymotrypsin-like activity. Plays a major role in the degradation of misfolded proteins. This chain is ATP-dependent Clp protease proteolytic subunit, found in Bacillus pumilus (strain SAFR-032).